A 65-amino-acid chain; its full sequence is Large ribosomal subunit protein bL35 (65 aa).

Belongs to the bacterial ribosomal protein bL35 family.

The sequence is that of Large ribosomal subunit protein bL35 from Methylobacillus flagellatus (strain ATCC 51484 / DSM 6875 / VKM B-1610 / KT).